A 119-amino-acid polypeptide reads, in one-letter code: Large ribosomal subunit protein uL22c (119 aa).

Belongs to the universal ribosomal protein uL22 family. Part of the 50S ribosomal subunit.

It localises to the plastid. Its subcellular location is the chloroplast. This protein binds specifically to 23S rRNA. Functionally, the globular domain of the protein is located near the polypeptide exit tunnel on the outside of the subunit, while an extended beta-hairpin is found that lines the wall of the exit tunnel in the center of the 70S ribosome. This chain is Large ribosomal subunit protein uL22c (rpl22), found in Chlorokybus atmophyticus (Soil alga).